The primary structure comprises 78 residues: Large ribosomal subunit protein bL28 (78 aa).

This sequence belongs to the bacterial ribosomal protein bL28 family.

The polypeptide is Large ribosomal subunit protein bL28 (Hamiltonella defensa subsp. Acyrthosiphon pisum (strain 5AT)).